The primary structure comprises 225 residues: ATP-dependent Clp protease proteolytic subunit (225 aa).

The Nucleophile role is filled by S101. Residue H126 is part of the active site.

It belongs to the peptidase S14 family. Component of the chloroplastic Clp protease core complex.

Its subcellular location is the plastid. The protein resides in the chloroplast stroma. It catalyses the reaction Hydrolysis of proteins to small peptides in the presence of ATP and magnesium. alpha-casein is the usual test substrate. In the absence of ATP, only oligopeptides shorter than five residues are hydrolyzed (such as succinyl-Leu-Tyr-|-NHMec, and Leu-Tyr-Leu-|-Tyr-Trp, in which cleavage of the -Tyr-|-Leu- and -Tyr-|-Trp bonds also occurs).. Cleaves peptides in various proteins in a process that requires ATP hydrolysis. Has a chymotrypsin-like activity. Plays a major role in the degradation of misfolded proteins. This Chlorokybus atmophyticus (Soil alga) protein is ATP-dependent Clp protease proteolytic subunit.